The primary structure comprises 280 residues: 2-dehydro-3-deoxyphosphooctonate aldolase (280 aa).

Belongs to the KdsA family.

The protein resides in the cytoplasm. The enzyme catalyses D-arabinose 5-phosphate + phosphoenolpyruvate + H2O = 3-deoxy-alpha-D-manno-2-octulosonate-8-phosphate + phosphate. The protein operates within carbohydrate biosynthesis; 3-deoxy-D-manno-octulosonate biosynthesis; 3-deoxy-D-manno-octulosonate from D-ribulose 5-phosphate: step 2/3. It functions in the pathway bacterial outer membrane biogenesis; lipopolysaccharide biosynthesis. The protein is 2-dehydro-3-deoxyphosphooctonate aldolase of Coxiella burnetii (strain CbuK_Q154) (Coxiella burnetii (strain Q154)).